Consider the following 490-residue polypeptide: GTPase Der (490 aa).

2 EngA-type G domains span residues 3-166 and 203-376; these read PVVA…MDDV and IKLA…DSST. GTP is bound by residues 9–16, 56–60, 118–121, 209–216, 256–260, and 321–324; these read GRPNVGKS, DTGGI, NKTD, DTAGV, and NKWD. The KH-like domain occupies 377 to 461; sequence RRVSTAMLTR…PIRIQFKEGE (85 aa).

Belongs to the TRAFAC class TrmE-Era-EngA-EngB-Septin-like GTPase superfamily. EngA (Der) GTPase family. As to quaternary structure, associates with the 50S ribosomal subunit.

GTPase that plays an essential role in the late steps of ribosome biogenesis. In Citrobacter koseri (strain ATCC BAA-895 / CDC 4225-83 / SGSC4696), this protein is GTPase Der.